The chain runs to 177 residues: MRLSAAVIALLSTSAAAFSVYRENSVSANDELDVPGKSPLRFCDAAADRKDDIVTIEEVILTPNPPEAGQTLTIEASGIVKEAIEEGAYVNLQVKYGYIRLINTSADLCKEMKNVELECPIKKGRLSITKNVELPKEIPPGKYTVEADVYNSDDKHITCLTATVFFGRKTLGFLDDL.

The signal sequence occupies residues M1–A17. Residues F18–D30 constitute a propeptide that is removed on maturation.

This sequence belongs to the NPC2 family. In terms of assembly, monomer.

In terms of biological role, catalyzes the intermembrane transfer of phosphatidylglycerol and phosphatidylinositol. This is Phosphatidylglycerol/phosphatidylinositol transfer protein (npc-2) from Neurospora crassa (strain ATCC 24698 / 74-OR23-1A / CBS 708.71 / DSM 1257 / FGSC 987).